Reading from the N-terminus, the 25-residue chain is Small ribosomal subunit protein uS19 (25 aa).

A disordered region spans residues 1–25 (GHKLGEFAPTRTFRGHKKEDKKVKR).

The protein belongs to the universal ribosomal protein uS19 family.

Functionally, protein S19 forms a complex with S13 that binds strongly to the 16S ribosomal RNA. The sequence is that of Small ribosomal subunit protein uS19 (rpsS) from Acholeplasma laidlawii.